Consider the following 523-residue polypeptide: DNA-directed RNA polymerase subunit Rpo2N (523 aa).

Residues 501–523 are disordered; that stretch reads SSMGVEGIPGISMETTSTTSADD. Over residues 513 to 523 the composition is skewed to polar residues; sequence METTSTTSADD.

Belongs to the RNA polymerase beta chain family. Part of the RNA polymerase complex.

The protein resides in the cytoplasm. The enzyme catalyses RNA(n) + a ribonucleoside 5'-triphosphate = RNA(n+1) + diphosphate. DNA-dependent RNA polymerase (RNAP) catalyzes the transcription of DNA into RNA using the four ribonucleoside triphosphates as substrates. The Rpo2 subunit (Rpo2N and Rpo2C in this organism) is implicated in DNA promoter recognition and in nucleotide binding. The protein is DNA-directed RNA polymerase subunit Rpo2N of Halobacterium salinarum (strain ATCC 29341 / DSM 671 / R1).